Here is a 36-residue protein sequence, read N- to C-terminus: Lambda-hexatoxin-Hv1a (36 aa).

Cystine bridges form between Cys3–Cys17, Cys10–Cys22, Cys13–Cys14, and Cys16–Cys33.

It belongs to the neurotoxin 11 (kappa toxin) family. As to expression, expressed by the venom gland.

It is found in the secreted. Functionally, this excitatory toxin inhibits insect calcium-activated potassium (KCa) channels (Slo-type). In Hadronyche versuta (Blue mountains funnel-web spider), this protein is Lambda-hexatoxin-Hv1a.